Consider the following 111-residue polypeptide: Mitochondrial import inner membrane translocase subunit TIM14 (111 aa).

Over 1-3 (MTG) the chain is Mitochondrial intermembrane. A helical transmembrane segment spans residues 4 to 24 (GLIAAGLGLAAVGFGARYVLR). Residues 25–111 (NQALIKKGME…AKDLMESTKS (87 aa)) lie on the Mitochondrial matrix side of the membrane. The J domain maps to 58–111 (EAAKILGITPSAKPAKIKDAHKKVMIVNHPDRGGSPYLAAKINEAKDLMESTKS).

Belongs to the TIM14 family. In terms of assembly, probable component of the PAM complex at least composed of a mitochondrial HSP70 protein, GrpE, tim-44, tim-16 and tim-14.

It localises to the mitochondrion inner membrane. Functionally, probable component of the PAM complex, a complex required for the translocation of transit peptide-containing proteins from the inner membrane into the mitochondrial matrix in an ATP-dependent manner. May act as a co-chaperone that stimulate the ATP-dependent activity. This Caenorhabditis briggsae protein is Mitochondrial import inner membrane translocase subunit TIM14 (dnj-21).